The sequence spans 421 residues: Large ribosomal subunit protein uL4 (421 aa).

A2 carries the post-translational modification N-acetylalanine. K14 is modified (N6-acetyllysine). R97 carries the post-translational modification Omega-N-methylarginine. Position 106 is an N6-acetyllysine (K106). A Glycyl lysine isopeptide (Lys-Gly) (interchain with G-Cter in SUMO2) cross-link involves residue K239. K259 is modified (N6-acetyllysine). T266 is modified (phosphothreonine). Phosphoserine is present on S290. R300 bears the Citrulline mark. K327 is covalently cross-linked (Glycyl lysine isopeptide (Lys-Gly) (interchain with G-Cter in SUMO2)). K333 and K353 each carry N6-acetyllysine. The interval 359–421 (EAKSEEKGVP…PTTEEKKPAA (63 aa)) is disordered. Position 361 is an N6-acetyllysine; alternate (K361). K361 participates in a covalent cross-link: Glycyl lysine isopeptide (Lys-Gly) (interchain with G-Cter in SUMO1); alternate. Phosphoserine is present on S362. Residues 368–391 (PGKKPRRKKGKKTVGVKKPKKPVV) are compositionally biased toward basic residues. Residues 401–421 (PAADKKPAEKKPTTEEKKPAA) are compositionally biased toward basic and acidic residues.

This sequence belongs to the universal ribosomal protein uL4 family. Component of the large ribosomal subunit. May bind IPO9 with low affinity. Interacts with RBM3. In terms of processing, citrullinated by PADI4.

It localises to the cytoplasm. Its function is as follows. Component of the large ribosomal subunit. The ribosome is a large ribonucleoprotein complex responsible for the synthesis of proteins in the cell. This is Large ribosomal subunit protein uL4 (RPL4) from Canis lupus familiaris (Dog).